Consider the following 117-residue polypeptide: MSSSKINPAIQFYEGVDETAIPEIRLTRSKDGKTGQAIFVFQKPDALSEATTGDITGMTLIDDEGALKTREVKARFLNGEPSAIEATYTWKTESDFERFMRFAERYAKKNGLGYSSK.

This sequence belongs to the Psb28 family. As to quaternary structure, part of the photosystem II complex.

It localises to the cellular thylakoid membrane. This chain is Photosystem II reaction center Psb28 protein, found in Prochlorococcus marinus (strain MIT 9211).